We begin with the raw amino-acid sequence, 163 residues long: Ribosome maturation factor RimP (163 aa).

The protein belongs to the RimP family.

The protein resides in the cytoplasm. Its function is as follows. Required for maturation of 30S ribosomal subunits. The sequence is that of Ribosome maturation factor RimP from Streptococcus thermophilus (strain CNRZ 1066).